The sequence spans 174 residues: Guided entry of tail-anchored proteins factor 1 (174 aa).

Residues 1–8 (MSASETDR) lie on the Lumenal side of the membrane. The chain crosses the membrane as a helical span at residues 9-29 (WAWLLVLSFVFGCNLLRILLP). Residues 30–99 (SLSSFISRVL…VKARTAQLAK (70 aa)) lie on the Cytoplasmic side of the membrane. The stretch at 39–94 (LQKDAEQESQMRAEIQGMKQELSTVNMMDEFARYARLERKINKMTDKLKTHVKART) forms a coiled coil. The segment at 39–97 (LQKDAEQESQMRAEIQGMKQELSTVNMMDEFARYARLERKINKMTDKLKTHVKARTAQL) is interaction with GET3/TRC40. A helical membrane pass occupies residues 100-120 (IKWFISVAFYILQAALMISLI). Residues 121 to 148 (WKYYSVPVAVVPSKWITPLDRLVAFPTR) lie on the Lumenal side of the membrane. The helical transmembrane segment at 149–169 (VAGGIGITCWILVCNKVVAIV) threads the bilayer. Residues 170-174 (LHPFS) are Cytoplasmic-facing.

This sequence belongs to the WRB/GET1 family. As to quaternary structure, component of the Golgi to ER traffic (GET) complex, which is composed of GET1, CAMLG/GET2 and GET3. Within the complex, GET1 and CAMLG form a heterotetramer which is stabilized by phosphatidylinositol binding and which binds to the GET3 homodimer. Interacts with CAMLG/GET2 (via C-terminus). GET3 shows a higher affinity for CAMLG than for GET1.

It localises to the endoplasmic reticulum membrane. In terms of biological role, required for the post-translational delivery of tail-anchored (TA) proteins to the endoplasmic reticulum. Together with CAMLG/GET2, acts as a membrane receptor for soluble GET3/TRC40, which recognizes and selectively binds the transmembrane domain of TA proteins in the cytosol. Required to ensure correct topology and ER insertion of CAMLG. The protein is Guided entry of tail-anchored proteins factor 1 of Mus musculus (Mouse).